Consider the following 284-residue polypeptide: RNase adapter protein RapZ (284 aa).

8-15 (GRSGSGKS) lines the ATP pocket. 56–59 (DVRN) is a GTP binding site. Positions 266 to 284 (RSRGKNVQSRHRTLEKRKS) are RNA-binding.

This sequence belongs to the RapZ-like family. RapZ subfamily. As to quaternary structure, homotrimer.

Modulates the synthesis of GlmS, by affecting the processing and stability of the regulatory small RNA GlmZ. When glucosamine-6-phosphate (GlcN6P) concentrations are high in the cell, RapZ binds GlmZ and targets it to cleavage by RNase E. Consequently, GlmZ is inactivated and unable to activate GlmS synthesis. Under low GlcN6P concentrations, RapZ is sequestered and inactivated by an other regulatory small RNA, GlmY, preventing GlmZ degradation and leading to synthesis of GlmS. This Klebsiella pneumoniae (strain 342) protein is RNase adapter protein RapZ.